A 513-amino-acid polypeptide reads, in one-letter code: MQSVLVLDFGSQYTQLIARRIRELGIYSEILPYSTTPETIREHNPRAIILSGGPTSVYGDSAILPHPGIFSLGLPILGICYGLQAIANHFGGAVESSSKQEFGRAKILVDRSADHESLLFEGFPDSDVWMSHGDKVTRMPEGFRVTASSGNSEMCAIESYGSKAALKIYGLQFHPEVQHSLYGKQLLGNFLLNIAGITPDWSSKSFIDHQIEDIRERAGNNTVICGISGGVDSTVAAVLVSKAIGKQLHCVFVDNGLLRKNEAEKVMQFLKPLGLKVTLADSRDLFLTRLKGVASPEKKRKIIGRTFIRVFEEHIHEEKFLVQGTLYPDVIESVSVKGPSETIKSHHNVGGLPKRMKLKLIEPLRELFKDEVRAVGRELGIAEDILMRHPFPGPGLAVRVLGSVNPERVEILQNADEIFIEELKSSGLYQQVWQAFSVLLPVQSVGVMGDKRTYENVLALRAVESTDGMTADWAHLPHDFLAKVSNRIINEVRGINRVAYDISSKPPATIEWE.

Residues S3–D200 enclose the Glutamine amidotransferase type-1 domain. C80 functions as the Nucleophile in the catalytic mechanism. Active-site residues include H174 and E176. The GMPS ATP-PPase domain maps to W201–R388. S228 to T234 contributes to the ATP binding site.

As to quaternary structure, homodimer.

It carries out the reaction XMP + L-glutamine + ATP + H2O = GMP + L-glutamate + AMP + diphosphate + 2 H(+). It functions in the pathway purine metabolism; GMP biosynthesis; GMP from XMP (L-Gln route): step 1/1. Catalyzes the synthesis of GMP from XMP. The polypeptide is GMP synthase [glutamine-hydrolyzing] (Chlorobium phaeovibrioides (strain DSM 265 / 1930) (Prosthecochloris vibrioformis (strain DSM 265))).